The primary structure comprises 101 residues: Large ribosomal subunit protein uL24 (101 aa).

The protein belongs to the universal ribosomal protein uL24 family. Part of the 50S ribosomal subunit.

In terms of biological role, one of two assembly initiator proteins, it binds directly to the 5'-end of the 23S rRNA, where it nucleates assembly of the 50S subunit. Functionally, one of the proteins that surrounds the polypeptide exit tunnel on the outside of the subunit. The polypeptide is Large ribosomal subunit protein uL24 (Streptococcus pyogenes serotype M2 (strain MGAS10270)).